The sequence spans 351 residues: Flap endonuclease 1 (351 aa).

An N-domain region spans residues 1–98; sequence MDLAELVEEI…QELERRKKVK (98 aa). Residues aspartate 27, aspartate 80, glutamate 154, glutamate 156, aspartate 175, aspartate 177, and aspartate 238 each coordinate Mg(2+). Residues 118 to 260 form an I-domain region; that stretch reads ELKKYAQMSI…TAYRIIKKYG (143 aa). Residues 343–351 form an interaction with PCNA region; that stretch reads RQTGLDQWF.

It belongs to the XPG/RAD2 endonuclease family. FEN1 subfamily. In terms of assembly, interacts with PCNA. PCNA stimulates the nuclease activity without altering cleavage specificity. The cofactor is Mg(2+).

In terms of biological role, structure-specific nuclease with 5'-flap endonuclease and 5'-3' exonuclease activities involved in DNA replication and repair. During DNA replication, cleaves the 5'-overhanging flap structure that is generated by displacement synthesis when DNA polymerase encounters the 5'-end of a downstream Okazaki fragment. Binds the unpaired 3'-DNA end and kinks the DNA to facilitate 5' cleavage specificity. Cleaves one nucleotide into the double-stranded DNA from the junction in flap DNA, leaving a nick for ligation. Also involved in the base excision repair (BER) pathway. Acts as a genome stabilization factor that prevents flaps from equilibrating into structures that lead to duplications and deletions. Also possesses 5'-3' exonuclease activity on nicked or gapped double-stranded DNA. The polypeptide is Flap endonuclease 1 (Sulfurisphaera tokodaii (strain DSM 16993 / JCM 10545 / NBRC 100140 / 7) (Sulfolobus tokodaii)).